A 336-amino-acid polypeptide reads, in one-letter code: Glyceraldehyde-3-phosphate dehydrogenase (336 aa).

NAD(+) contacts are provided by residues arginine 12 to isoleucine 13, aspartate 34, arginine 78, and threonine 121. D-glyceraldehyde 3-phosphate contacts are provided by residues serine 151–threonine 153, threonine 182, arginine 199, threonine 212–glycine 213, and arginine 235. Cysteine 152 acts as the Nucleophile in catalysis. Asparagine 316 contacts NAD(+).

It belongs to the glyceraldehyde-3-phosphate dehydrogenase family. As to quaternary structure, homotetramer.

The protein localises to the cytoplasm. The catalysed reaction is D-glyceraldehyde 3-phosphate + phosphate + NAD(+) = (2R)-3-phospho-glyceroyl phosphate + NADH + H(+). It participates in carbohydrate degradation; glycolysis; pyruvate from D-glyceraldehyde 3-phosphate: step 1/5. Its function is as follows. Catalyzes the oxidative phosphorylation of glyceraldehyde 3-phosphate (G3P) to 1,3-bisphosphoglycerate (BPG) using the cofactor NAD. The first reaction step involves the formation of a hemiacetal intermediate between G3P and a cysteine residue, and this hemiacetal intermediate is then oxidized to a thioester, with concomitant reduction of NAD to NADH. The reduced NADH is then exchanged with the second NAD, and the thioester is attacked by a nucleophilic inorganic phosphate to produce BPG. This chain is Glyceraldehyde-3-phosphate dehydrogenase (gap), found in Streptococcus pyogenes serotype M3 (strain ATCC BAA-595 / MGAS315).